Reading from the N-terminus, the 75-residue chain is Exodeoxyribonuclease 7 small subunit (75 aa).

Belongs to the XseB family. As to quaternary structure, heterooligomer composed of large and small subunits.

The protein localises to the cytoplasm. The enzyme catalyses Exonucleolytic cleavage in either 5'- to 3'- or 3'- to 5'-direction to yield nucleoside 5'-phosphates.. Functionally, bidirectionally degrades single-stranded DNA into large acid-insoluble oligonucleotides, which are then degraded further into small acid-soluble oligonucleotides. The polypeptide is Exodeoxyribonuclease 7 small subunit (Thermoanaerobacter sp. (strain X514)).